The chain runs to 237 residues: Uridylate kinase (237 aa).

11-14 is an ATP binding site; it reads KLSG. Gly53 is a binding site for UMP. 2 residues coordinate ATP: Gly54 and Arg58. UMP is bound by residues Asp73 and 134 to 141; that span reads TGNPFFTT. Positions 161, 167, and 170 each coordinate ATP.

It belongs to the UMP kinase family. In terms of assembly, homohexamer.

Its subcellular location is the cytoplasm. It carries out the reaction UMP + ATP = UDP + ADP. It participates in pyrimidine metabolism; CTP biosynthesis via de novo pathway; UDP from UMP (UMPK route): step 1/1. Inhibited by UTP. In terms of biological role, catalyzes the reversible phosphorylation of UMP to UDP. The polypeptide is Uridylate kinase (Burkholderia thailandensis (strain ATCC 700388 / DSM 13276 / CCUG 48851 / CIP 106301 / E264)).